The sequence spans 258 residues: Indole-3-glycerol phosphate synthase (258 aa).

This sequence belongs to the TrpC family.

It carries out the reaction 1-(2-carboxyphenylamino)-1-deoxy-D-ribulose 5-phosphate + H(+) = (1S,2R)-1-C-(indol-3-yl)glycerol 3-phosphate + CO2 + H2O. It functions in the pathway amino-acid biosynthesis; L-tryptophan biosynthesis; L-tryptophan from chorismate: step 4/5. This chain is Indole-3-glycerol phosphate synthase, found in Campylobacter jejuni subsp. jejuni serotype O:23/36 (strain 81-176).